A 156-amino-acid polypeptide reads, in one-letter code: Ribosomal RNA large subunit methyltransferase H (156 aa).

S-adenosyl-L-methionine contacts are provided by residues Leu-73, Gly-104, and Leu-123 to Leu-128.

Belongs to the RNA methyltransferase RlmH family. Homodimer.

The protein resides in the cytoplasm. The enzyme catalyses pseudouridine(1915) in 23S rRNA + S-adenosyl-L-methionine = N(3)-methylpseudouridine(1915) in 23S rRNA + S-adenosyl-L-homocysteine + H(+). Specifically methylates the pseudouridine at position 1915 (m3Psi1915) in 23S rRNA. This Pectobacterium atrosepticum (strain SCRI 1043 / ATCC BAA-672) (Erwinia carotovora subsp. atroseptica) protein is Ribosomal RNA large subunit methyltransferase H.